The following is a 245-amino-acid chain: GTP cyclohydrolase 1 type 2 homolog (245 aa).

A divalent metal cation is bound by residues His63, His64, Asp100, His213, and Glu217.

The protein belongs to the GTP cyclohydrolase I type 2/NIF3 family. As to quaternary structure, homohexamer.

In Archaeoglobus fulgidus (strain ATCC 49558 / DSM 4304 / JCM 9628 / NBRC 100126 / VC-16), this protein is GTP cyclohydrolase 1 type 2 homolog.